Reading from the N-terminus, the 152-residue chain is B3 domain-containing protein At1g10455 (152 aa).

Residues 24–131 (LKKKLSDSDL…EVKFKHFKSQ (108 aa)) constitute a DNA-binding region (TF-B3).

The protein localises to the nucleus. This chain is B3 domain-containing protein At1g10455, found in Arabidopsis thaliana (Mouse-ear cress).